The chain runs to 527 residues: Exodeoxyribonuclease 7 large subunit (527 aa).

The disordered stretch occupies residues 499 to 527; sequence AGEEGAPPPAAPKKRASRPVVPTKQGSLF.

Belongs to the XseA family. Heterooligomer composed of large and small subunits.

The protein resides in the cytoplasm. It carries out the reaction Exonucleolytic cleavage in either 5'- to 3'- or 3'- to 5'-direction to yield nucleoside 5'-phosphates.. Bidirectionally degrades single-stranded DNA into large acid-insoluble oligonucleotides, which are then degraded further into small acid-soluble oligonucleotides. The polypeptide is Exodeoxyribonuclease 7 large subunit (Sinorhizobium fredii (strain NBRC 101917 / NGR234)).